The primary structure comprises 201 residues: 3-isopropylmalate dehydratase small subunit (201 aa).

The protein belongs to the LeuD family. LeuD type 1 subfamily. In terms of assembly, heterodimer of LeuC and LeuD.

The catalysed reaction is (2R,3S)-3-isopropylmalate = (2S)-2-isopropylmalate. Its pathway is amino-acid biosynthesis; L-leucine biosynthesis; L-leucine from 3-methyl-2-oxobutanoate: step 2/4. Functionally, catalyzes the isomerization between 2-isopropylmalate and 3-isopropylmalate, via the formation of 2-isopropylmaleate. The sequence is that of 3-isopropylmalate dehydratase small subunit from Azorhizobium caulinodans (strain ATCC 43989 / DSM 5975 / JCM 20966 / LMG 6465 / NBRC 14845 / NCIMB 13405 / ORS 571).